Here is a 108-residue protein sequence, read N- to C-terminus: UPF0060 membrane protein amb3269 (108 aa).

The next 4 helical transmembrane spans lie at 4-24 (IPTYILAAFAEIGGCFAFWAW), 31-51 (PLWLVPGMASLGLFAWALTRI), 59-79 (AYAAYGGIYILASLIWMWAVE), and 85-105 (RWDTIGAAICVVGAMVIIFGP).

The protein belongs to the UPF0060 family.

Its subcellular location is the cell inner membrane. This chain is UPF0060 membrane protein amb3269, found in Paramagnetospirillum magneticum (strain ATCC 700264 / AMB-1) (Magnetospirillum magneticum).